The chain runs to 145 residues: Mitochondrial import receptor subunit TOM20 homolog (145 aa).

The Mitochondrial intermembrane segment spans residues Met-1–Ser-6. Residues Ala-7 to Phe-24 traverse the membrane as a helical segment. Residues Asp-25 to Glu-145 are Cytoplasmic-facing. Glycyl lysine isopeptide (Lys-Gly) (interchain with G-Cter in ubiquitin) cross-links involve residues Lys-35, Lys-56, Lys-61, and Lys-68. Ser-135 and Ser-138 each carry phosphoserine.

Belongs to the Tom20 family. Forms part of the preprotein translocase complex of the outer mitochondrial membrane (TOM complex) which consists of at least 7 different proteins (TOMM5, TOMM6, TOMM7, TOMM20, TOMM22, TOMM40 and TOMM70). Interacts with TOM22. Interacts with APEX1. Interacts with TBC1D21. Upon mitochondrial depolarization, interacts with PINK1; the interaction is required for PINK1-TOM-TIM23 supercomplex formation which is critical for PINK1 stabilization at the outer mitochondrial membrane, kinase activation and downstream mitophagy. Ubiquitinated by PRKN during mitophagy, leading to its degradation and enhancement of mitophagy. Deubiquitinated by USP30. In terms of tissue distribution, expressed in brain, kidney, stomach, colon, jejunum, ileum, testis, ovary and oviduct (at protein level). In the brain, expressed in neural cells of the cerebrum and cerebellum (at protein level). In the kidney, expressed in the proximal to distal tubule in the cortex and the outer and inner zones of the medulla (at protein level). In the stomach, expressed in the basal layer of stratified squamous epithelia in the forestomach and in the gastric pit and fundic gland of the glandular stomach (at protein level). Expressed in epithelial cells of the jejunum, ileum, and colon (at protein level). In the testis, expressed by spermatocytes and spermatogonia (at protein level). In the ovaries, expressed by follicular epithelial cells and corpus luteum cells (at protein level). In the oviduct, expressed in the epithelia of the isthmus and the ciliated cells of the ampulla (at protein level). Expressed in the sperm midpiece (at protein level).

It localises to the mitochondrion outer membrane. In terms of biological role, central component of the receptor complex responsible for the recognition and translocation of cytosolically synthesized mitochondrial preproteins. Together with TOM22 functions as the transit peptide receptor at the surface of the mitochondrion outer membrane and facilitates the movement of preproteins into the TOM40 translocation pore. Required for the translocation across the mitochondrial outer membrane of cytochrome P450 monooxygenases. The polypeptide is Mitochondrial import receptor subunit TOM20 homolog (Tomm20) (Mus musculus (Mouse)).